The primary structure comprises 535 residues: Flavin-containing monooxygenase iboF (535 aa).

The N-terminal stretch at 1-24 (MFSLRPTALVSLSVVLFSIQETLS) is a signal peptide. 60–65 (GAGPSG) lines the FAD pocket. N-linked (GlcNAc...) asparagine glycans are attached at residues Asn134, Asn243, and Asn300. 307–312 (GAAASG) contacts NADP(+). N-linked (GlcNAc...) asparagine glycans are attached at residues Asn356, Asn382, and Asn410.

Belongs to the FMO family. FAD serves as cofactor.

Its pathway is secondary metabolite biosynthesis. Flavin-containing monooxygenase; part of the gene cluster that mediates the biosynthesis of the psychoactive metabolites ibotenic acid and muscimol. The first committed step is glutamate hydroxylation by the 2-oxoglutarate-dependent dioxygenase iboH, and the last step is decarboxylation of ibotenic acid to muscimol by the decarboxylase iboD. The order of the intermediate reactions is somewhat ambiguous. IboA likely activates the carboxylic acid at position 5 to introduce an amide bond, and the flavin monooxygenase iboF generates the N-O bond. There are several options for the latter step. One option is that iboF directly hydroxylates the amide nitrogen formed by iboA to produce a hydroxamic acid species. Another option is that iboF hydroxylates an external N-containing compound, whose resulting N-O bond is subsequently introduced into the hydroxyglutamate scaffold. The paralogous PLP-dependent cystathionine gamma-synthase-like enzymes iboG1 and iboG2 are likely involved in substitution of the OH group at position 3 by the O-N moiety. The first cyclic intermediate is most probably tricholomic acid which is likely desaturated to ibotenic acid by the cytochrome P450 monooxygenase iboC. The chain is Flavin-containing monooxygenase iboF from Amanita muscaria (strain Koide BX008).